The chain runs to 312 residues: Glycerol 2-dehydrogenase (NADP(+)) (312 aa).

The Proton donor role is filled by Y56. A substrate-binding site is contributed by H112. NADP(+) is bound at residue 220–274; it reads SPLGSTDAPLLKEPVILEIAKKNNVQPGHVVISWHVQRGYVVLPKSVNPDRIKTN. Position 306 is a phosphoserine (S306).

Belongs to the aldo/keto reductase family.

The protein localises to the cytoplasm. It catalyses the reaction glycerol + NADP(+) = dihydroxyacetone + NADPH + H(+). Glycerol dehydrogenase involved in glycerol catabolism under microaerobic conditions. Has mRNA binding activity. The sequence is that of Glycerol 2-dehydrogenase (NADP(+)) (GCY1) from Saccharomyces cerevisiae (strain ATCC 204508 / S288c) (Baker's yeast).